We begin with the raw amino-acid sequence, 58 residues long: Large ribosomal subunit protein uL30 (58 aa).

It belongs to the universal ribosomal protein uL30 family. As to quaternary structure, part of the 50S ribosomal subunit.

This is Large ribosomal subunit protein uL30 from Buchnera aphidicola subsp. Baizongia pistaciae (strain Bp).